A 138-amino-acid chain; its full sequence is uncharacterized protein (138 aa).

Residues I11 to Y33 form a helical membrane-spanning segment.

It localises to the membrane. This is an uncharacterized protein from Aquifex aeolicus (strain VF5).